Consider the following 131-residue polypeptide: Fumarate reductase subunit C (131 aa).

3 consecutive transmembrane segments (helical) span residues 30 to 50 (EGTA…LFAL), 61 to 81 (IGFL…AAAL), and 110 to 130 (IKGL…VALF).

Belongs to the FrdC family. As to quaternary structure, part of an enzyme complex containing four subunits: a flavoprotein (FrdA), an iron-sulfur protein (FrdB), and two hydrophobic anchor proteins (FrdC and FrdD).

It is found in the cell inner membrane. Two distinct, membrane-bound, FAD-containing enzymes are responsible for the catalysis of fumarate and succinate interconversion; fumarate reductase is used in anaerobic growth, and succinate dehydrogenase is used in aerobic growth. Anchors the catalytic components of the fumarate reductase complex to the cell inner membrane, binds quinones. This chain is Fumarate reductase subunit C, found in Klebsiella pneumoniae (strain 342).